Here is a 517-residue protein sequence, read N- to C-terminus: Phospholipase C C (517 aa).

A signal peptide (tat-type signal) is located at residues 1–39 (MVSQGAFAGMSRRAFLAKAAGAGAAAVLTDWAAPVIEKA).

This sequence belongs to the bacterial phospholipase C family. In terms of processing, predicted to be exported by the Tat system. The position of the signal peptide cleavage has not been experimentally proven.

It is found in the secreted. The protein resides in the cell wall. It catalyses the reaction a 1,2-diacyl-sn-glycero-3-phosphocholine + H2O = phosphocholine + a 1,2-diacyl-sn-glycerol + H(+). The catalysed reaction is 1,2-dihexadecanoyl-sn-glycero-3-phosphocholine + H2O = 1,2-dihexadecanoyl-sn-glycerol + phosphocholine + H(+). Its function is as follows. Involved in virulence. Induces cytotoxic effects on mouse macrophage cell lines, via direct or indirect enzymatic hydrolysis of cell membrane phospholipids. Hydrolyzes phosphatidylcholine. Does not have hemolytic activity. In Mycobacterium tuberculosis (strain ATCC 25618 / H37Rv), this protein is Phospholipase C C.